Reading from the N-terminus, the 352-residue chain is Probable dual-specificity RNA methyltransferase RlmN (352 aa).

The Proton acceptor role is filled by glutamate 93. One can recognise a Radical SAM core domain in the interval 99–332 (TAKRLTVCVS…ATVRQTRGLD (234 aa)). Cysteine 106 and cysteine 337 are disulfide-bonded. Cysteine 113, cysteine 117, and cysteine 120 together coordinate [4Fe-4S] cluster. S-adenosyl-L-methionine is bound by residues 160–161 (GE), serine 190, 213–215 (SLH), and asparagine 294. Cysteine 337 serves as the catalytic S-methylcysteine intermediate.

The protein belongs to the radical SAM superfamily. RlmN family. The cofactor is [4Fe-4S] cluster.

The protein localises to the cytoplasm. It catalyses the reaction adenosine(2503) in 23S rRNA + 2 reduced [2Fe-2S]-[ferredoxin] + 2 S-adenosyl-L-methionine = 2-methyladenosine(2503) in 23S rRNA + 5'-deoxyadenosine + L-methionine + 2 oxidized [2Fe-2S]-[ferredoxin] + S-adenosyl-L-homocysteine. The enzyme catalyses adenosine(37) in tRNA + 2 reduced [2Fe-2S]-[ferredoxin] + 2 S-adenosyl-L-methionine = 2-methyladenosine(37) in tRNA + 5'-deoxyadenosine + L-methionine + 2 oxidized [2Fe-2S]-[ferredoxin] + S-adenosyl-L-homocysteine. In terms of biological role, specifically methylates position 2 of adenine 2503 in 23S rRNA and position 2 of adenine 37 in tRNAs. The polypeptide is Probable dual-specificity RNA methyltransferase RlmN (Synechococcus sp. (strain JA-2-3B'a(2-13)) (Cyanobacteria bacterium Yellowstone B-Prime)).